We begin with the raw amino-acid sequence, 128 residues long: Phosphoribosyl-AMP cyclohydrolase (128 aa).

D89 contributes to the Mg(2+) binding site. C90 is a binding site for Zn(2+). Mg(2+) contacts are provided by D91 and D93. The Zn(2+) site is built by C106 and C113.

The protein belongs to the PRA-CH family. In terms of assembly, homodimer. Mg(2+) serves as cofactor. The cofactor is Zn(2+).

The protein resides in the cytoplasm. The catalysed reaction is 1-(5-phospho-beta-D-ribosyl)-5'-AMP + H2O = 1-(5-phospho-beta-D-ribosyl)-5-[(5-phospho-beta-D-ribosylamino)methylideneamino]imidazole-4-carboxamide. It functions in the pathway amino-acid biosynthesis; L-histidine biosynthesis; L-histidine from 5-phospho-alpha-D-ribose 1-diphosphate: step 3/9. Functionally, catalyzes the hydrolysis of the adenine ring of phosphoribosyl-AMP. In Pyrobaculum calidifontis (strain DSM 21063 / JCM 11548 / VA1), this protein is Phosphoribosyl-AMP cyclohydrolase.